The primary structure comprises 325 residues: GMP reductase (325 aa).

The active-site Thioimidate intermediate is Cys173. Residue 202-225 coordinates NADP(+); it reads IIADGGIRSHGDIAKSVRFGATMV.

The protein belongs to the IMPDH/GMPR family. GuaC type 2 subfamily.

It catalyses the reaction IMP + NH4(+) + NADP(+) = GMP + NADPH + 2 H(+). In terms of biological role, catalyzes the irreversible NADPH-dependent deamination of GMP to IMP. It functions in the conversion of nucleobase, nucleoside and nucleotide derivatives of G to A nucleotides, and in maintaining the intracellular balance of A and G nucleotides. The polypeptide is GMP reductase (Acidovorax ebreus (strain TPSY) (Diaphorobacter sp. (strain TPSY))).